Here is a 98-residue protein sequence, read N- to C-terminus: Large ribosomal subunit protein uL23 (98 aa).

This sequence belongs to the universal ribosomal protein uL23 family. Part of the 50S ribosomal subunit. Contacts protein L29, and trigger factor when it is bound to the ribosome.

Its function is as follows. One of the early assembly proteins it binds 23S rRNA. One of the proteins that surrounds the polypeptide exit tunnel on the outside of the ribosome. Forms the main docking site for trigger factor binding to the ribosome. This chain is Large ribosomal subunit protein uL23, found in Saccharophagus degradans (strain 2-40 / ATCC 43961 / DSM 17024).